A 525-amino-acid polypeptide reads, in one-letter code: GMP synthase [glutamine-hydrolyzing] (525 aa).

One can recognise a Glutamine amidotransferase type-1 domain in the interval proline 16–arginine 205. Cysteine 93 serves as the catalytic Nucleophile. Catalysis depends on residues histidine 179 and glutamate 181. Positions tryptophan 206–arginine 399 constitute a GMPS ATP-PPase domain. ATP is bound at residue serine 233 to alanine 239.

As to quaternary structure, homodimer.

The catalysed reaction is XMP + L-glutamine + ATP + H2O = GMP + L-glutamate + AMP + diphosphate + 2 H(+). Its pathway is purine metabolism; GMP biosynthesis; GMP from XMP (L-Gln route): step 1/1. Its function is as follows. Catalyzes the synthesis of GMP from XMP. The polypeptide is GMP synthase [glutamine-hydrolyzing] (Mycobacterium marinum (strain ATCC BAA-535 / M)).